A 673-amino-acid chain; its full sequence is DNA ligase (673 aa).

Residues 34–38 (DAEYD), 83–84 (SL), and E116 contribute to the NAD(+) site. K118 functions as the N6-AMP-lysine intermediate in the catalytic mechanism. NAD(+)-binding residues include R139, E176, K293, and K317. Residues C411, C414, C429, and C435 each coordinate Zn(2+). The region spanning 595-673 (NQQNPFFGKT…EDEFLKWVNS (79 aa)) is the BRCT domain.

Belongs to the NAD-dependent DNA ligase family. LigA subfamily. Requires Mg(2+) as cofactor. The cofactor is Mn(2+).

The catalysed reaction is NAD(+) + (deoxyribonucleotide)n-3'-hydroxyl + 5'-phospho-(deoxyribonucleotide)m = (deoxyribonucleotide)n+m + AMP + beta-nicotinamide D-nucleotide.. Its function is as follows. DNA ligase that catalyzes the formation of phosphodiester linkages between 5'-phosphoryl and 3'-hydroxyl groups in double-stranded DNA using NAD as a coenzyme and as the energy source for the reaction. It is essential for DNA replication and repair of damaged DNA. This is DNA ligase from Legionella pneumophila (strain Paris).